The following is a 272-amino-acid chain: Alcohol dehydrogenase-related 31 kDa protein (272 aa).

11–34 (YVADCGGIALETSKVLMTKNIAKL) provides a ligand contact to NAD(+). Ser139 serves as a coordination point for substrate. Tyr152 (proton acceptor) is an active-site residue.

This sequence belongs to the short-chain dehydrogenases/reductases (SDR) family.

In Drosophila teissieri (Fruit fly), this protein is Alcohol dehydrogenase-related 31 kDa protein (Adhr).